The chain runs to 648 residues: Transketolase (648 aa).

His22 lines the substrate pocket. Thiamine diphosphate contacts are provided by residues His62 and 109–111; that span reads GPL. Asp150 is a binding site for Mg(2+). Thiamine diphosphate-binding residues include Gly151 and Asn180. 2 residues coordinate Mg(2+): Asn180 and Val182. Residues His252, Arg345, and Ser372 each coordinate substrate. His252 contributes to the thiamine diphosphate binding site. Glu397 (proton donor) is an active-site residue. Phe423 serves as a coordination point for thiamine diphosphate. Substrate contacts are provided by His447, Asp455, and Arg506.

It belongs to the transketolase family. As to quaternary structure, homodimer. Requires Mg(2+) as cofactor. It depends on Ca(2+) as a cofactor. The cofactor is Mn(2+). Co(2+) is required as a cofactor. Thiamine diphosphate serves as cofactor.

It carries out the reaction D-sedoheptulose 7-phosphate + D-glyceraldehyde 3-phosphate = aldehydo-D-ribose 5-phosphate + D-xylulose 5-phosphate. Its function is as follows. Catalyzes the transfer of a two-carbon ketol group from a ketose donor to an aldose acceptor, via a covalent intermediate with the cofactor thiamine pyrophosphate. This Mycoplasma pneumoniae (strain ATCC 29342 / M129 / Subtype 1) (Mycoplasmoides pneumoniae) protein is Transketolase (tkt).